The primary structure comprises 320 residues: Mitochondrial glycine transporter (320 aa).

Solcar repeat units follow at residues 8 to 92 (SKTT…LRQG), 121 to 205 (LSNW…LKRR), and 223 to 307 (SSSS…LILR). 6 helical membrane-spanning segments follow: residues 14 to 39 (FAAGLCSGLTSSILLQPADLLKTRVQ), 67 to 93 (GTLPSALRTGFGSALYFTSLNALRQGL), 127 to 152 (LATGAVARTAAGFVMMPVTVLKVRYE), 180 to 203 (GFGATAARDAPYAGLYVLFYEQLK), 227 to 253 (INFVSGGLAAGLATAITNPFDAVKTRL), and 282 to 300 (GLGLRITRKALSSALAWTV).

The protein belongs to the mitochondrial carrier (TC 2.A.29) family. SLC25A38 subfamily.

Its subcellular location is the mitochondrion inner membrane. The enzyme catalyses glycine(in) = glycine(out). Its function is as follows. Mitochondrial glycine transporter that imports glycine into the mitochondrial matrix. Plays an important role in providing glycine for the first enzymatic step in heme biosynthesis, the condensation of glycine with succinyl-CoA to produce 5-aminolevulinate (ALA) in the mitochondrial matrix. The sequence is that of Mitochondrial glycine transporter from Aspergillus fumigatus (strain CBS 144.89 / FGSC A1163 / CEA10) (Neosartorya fumigata).